We begin with the raw amino-acid sequence, 126 residues long: Holo-[acyl-carrier-protein] synthase (126 aa).

Residues Asp-9 and Glu-57 each coordinate Mg(2+).

Belongs to the P-Pant transferase superfamily. AcpS family. The cofactor is Mg(2+).

The protein resides in the cytoplasm. The enzyme catalyses apo-[ACP] + CoA = holo-[ACP] + adenosine 3',5'-bisphosphate + H(+). In terms of biological role, transfers the 4'-phosphopantetheine moiety from coenzyme A to a Ser of acyl-carrier-protein. This Pseudoalteromonas atlantica (strain T6c / ATCC BAA-1087) protein is Holo-[acyl-carrier-protein] synthase.